The chain runs to 508 residues: Photosystem II CP47 reaction center protein (508 aa).

A run of 6 helical transmembrane segments spans residues 21 to 36 (SVHI…WAGS), 101 to 115 (IVFS…IWHW), 140 to 156 (GIHL…FGAF), 203 to 218 (IAAG…FHLS), 237 to 252 (VLSS…AFVV), and 457 to 472 (SFAL…HGAR).

This sequence belongs to the PsbB/PsbC family. PsbB subfamily. In terms of assembly, PSII is composed of 1 copy each of membrane proteins PsbA, PsbB, PsbC, PsbD, PsbE, PsbF, PsbH, PsbI, PsbJ, PsbK, PsbL, PsbM, PsbT, PsbX, PsbY, PsbZ, Psb30/Ycf12, at least 3 peripheral proteins of the oxygen-evolving complex and a large number of cofactors. It forms dimeric complexes. Requires Binds multiple chlorophylls. PSII binds additional chlorophylls, carotenoids and specific lipids. as cofactor.

The protein resides in the plastid. It is found in the chloroplast thylakoid membrane. One of the components of the core complex of photosystem II (PSII). It binds chlorophyll and helps catalyze the primary light-induced photochemical processes of PSII. PSII is a light-driven water:plastoquinone oxidoreductase, using light energy to abstract electrons from H(2)O, generating O(2) and a proton gradient subsequently used for ATP formation. The chain is Photosystem II CP47 reaction center protein from Olimarabidopsis pumila (Dwarf rocket).